We begin with the raw amino-acid sequence, 315 residues long: Probable carboxylesterase 3 (315 aa).

Position 1 is an N-acetylmethionine (Met-1). Residues 81-83 (HGG) carry the Involved in the stabilization of the negatively charged intermediate by the formation of the oxyanion hole motif. Residues Ser-160, Asp-258, and His-290 contribute to the active site.

It belongs to the 'GDXG' lipolytic enzyme family. As to expression, expressed in flowers and siliques.

It catalyses the reaction a carboxylic ester + H2O = an alcohol + a carboxylate + H(+). In terms of biological role, carboxylesterase acting on esters with varying acyl chain length. The protein is Probable carboxylesterase 3 (CXE3) of Arabidopsis thaliana (Mouse-ear cress).